A 351-amino-acid chain; its full sequence is Biotin synthase (351 aa).

The Radical SAM core domain maps to 49–265; sequence NRVRIHILDN…LSVFRLVNPD (217 aa). 3 residues coordinate [4Fe-4S] cluster: C64, C68, and C71. The [2Fe-2S] cluster site is built by C108, C140, C200, and R269.

The protein belongs to the radical SAM superfamily. Biotin synthase family. As to quaternary structure, homodimer. [4Fe-4S] cluster is required as a cofactor. [2Fe-2S] cluster serves as cofactor.

It carries out the reaction (4R,5S)-dethiobiotin + (sulfur carrier)-SH + 2 reduced [2Fe-2S]-[ferredoxin] + 2 S-adenosyl-L-methionine = (sulfur carrier)-H + biotin + 2 5'-deoxyadenosine + 2 L-methionine + 2 oxidized [2Fe-2S]-[ferredoxin]. It participates in cofactor biosynthesis; biotin biosynthesis; biotin from 7,8-diaminononanoate: step 2/2. In terms of biological role, catalyzes the conversion of dethiobiotin (DTB) to biotin by the insertion of a sulfur atom into dethiobiotin via a radical-based mechanism. This Leptospira biflexa serovar Patoc (strain Patoc 1 / Ames) protein is Biotin synthase.